The sequence spans 246 residues: Type III pantothenate kinase (246 aa).

6–13 contacts ATP; the sequence is DVGNTHSV. Substrate is bound at residue 103-106; sequence GADR. Asp105 serves as the catalytic Proton acceptor. Asp125 contributes to the K(+) binding site. Position 128 (Thr128) interacts with ATP. Position 179 (Thr179) interacts with substrate.

It belongs to the type III pantothenate kinase family. As to quaternary structure, homodimer. NH4(+) serves as cofactor. It depends on K(+) as a cofactor.

It localises to the cytoplasm. It carries out the reaction (R)-pantothenate + ATP = (R)-4'-phosphopantothenate + ADP + H(+). It functions in the pathway cofactor biosynthesis; coenzyme A biosynthesis; CoA from (R)-pantothenate: step 1/5. In terms of biological role, catalyzes the phosphorylation of pantothenate (Pan), the first step in CoA biosynthesis. In Thermotoga maritima (strain ATCC 43589 / DSM 3109 / JCM 10099 / NBRC 100826 / MSB8), this protein is Type III pantothenate kinase (coaX).